The chain runs to 835 residues: Cap-specific mRNA (nucleoside-2'-O-)-methyltransferase 1 (835 aa).

Positions 1-67 (MKRRTDPECT…EGKQHSSDSF (67 aa)) are disordered. The short motif at 2–19 (KRRTDPECTAPIKKQKKR) is the Bipartite nuclear localization signal element. Serine 28, serine 31, serine 53, serine 66, and serine 91 each carry phosphoserine. Residues 37-54 (SSVSHGAKASTTSLSGSD) show a composition bias toward polar residues. The segment covering 57-67 (TEGKQHSSDSF) has biased composition (basic and acidic residues). In terms of domain architecture, G-patch spans 87–133 (YNSVSQKLMAKMGFREGEGLGKYSQGRKDIVEASSQKGRRGLGLTLR). Lysine 108 is subject to N6-acetyllysine. Substrate-binding positions include 203–207 (KSVFD) and arginine 218. The RrmJ-type SAM-dependent 2'-O-MTase domain maps to 231–450 (FFLNRAAMKM…ERYVVCKGLK (220 aa)). Asparagine 234 provides a ligand contact to S-adenosyl-L-methionine. Lysine 239 is an active-site residue. S-adenosyl-L-methionine is bound by residues 277-283 (CAGPGGF) and 335-336 (DI). The active site involves aspartate 364. Substrate is bound at residue 374–376 (NLQ). The Proton acceptor role is filled by lysine 404. Asparagine 439 serves as a coordination point for substrate. The interaction with POLR2A stretch occupies residues 727–835 (SSGTPKLSYT…VLSFIQMHRA (109 aa)). The region spanning 752 to 786 (RTVNEPWTMGFSKSFKKKFFYNKKTKDSTFDLPAD) is the WW domain.

Interacts with POLR2A (via C-terminus).

Its subcellular location is the nucleus. It catalyses the reaction a 5'-end (N(7)-methyl 5'-triphosphoguanosine)-ribonucleoside in mRNA + S-adenosyl-L-methionine = a 5'-end (N(7)-methyl 5'-triphosphoguanosine)-(2'-O-methyl-ribonucleoside) in mRNA + S-adenosyl-L-homocysteine + H(+). Its function is as follows. S-adenosyl-L-methionine-dependent methyltransferase that mediates mRNA cap1 2'-O-ribose methylation to the 5'-cap structure of mRNAs. Methylates the ribose of the first nucleotide of a m(7)GpppG-capped mRNA and small nuclear RNA (snRNA) to produce m(7)GpppRm (cap1). Displays a preference for cap0 transcripts. Cap1 modification is linked to higher levels of translation. May be involved in the interferon response pathway. The chain is Cap-specific mRNA (nucleoside-2'-O-)-methyltransferase 1 (CMTR1) from Homo sapiens (Human).